A 68-amino-acid polypeptide reads, in one-letter code: Putative membrane protein insertion efficiency factor (68 aa).

This sequence belongs to the UPF0161 family.

It is found in the cell inner membrane. Could be involved in insertion of integral membrane proteins into the membrane. This chain is Putative membrane protein insertion efficiency factor, found in Aquifex aeolicus (strain VF5).